A 415-amino-acid chain; its full sequence is Tyrosine--tRNA ligase (415 aa).

L-tyrosine is bound at residue Tyr34. The short motif at 39–48 (PTSDSLTVGH) is the 'HIGH' region element. 2 residues coordinate L-tyrosine: Tyr164 and Gln168. A 'KMSKS' region motif is present at residues 225–229 (KFGKS). Position 228 (Lys228) interacts with ATP. Residues 348–414 (IPLSEALVKT…GKKNNSLIIL (67 aa)) enclose the S4 RNA-binding domain.

It belongs to the class-I aminoacyl-tRNA synthetase family. TyrS type 1 subfamily. As to quaternary structure, homodimer.

Its subcellular location is the cytoplasm. It carries out the reaction tRNA(Tyr) + L-tyrosine + ATP = L-tyrosyl-tRNA(Tyr) + AMP + diphosphate + H(+). In terms of biological role, catalyzes the attachment of tyrosine to tRNA(Tyr) in a two-step reaction: tyrosine is first activated by ATP to form Tyr-AMP and then transferred to the acceptor end of tRNA(Tyr). This chain is Tyrosine--tRNA ligase, found in Phytoplasma australiense.